The primary structure comprises 163 residues: ATP synthase subunit b 1 (163 aa).

The chain crosses the membrane as a helical span at residues 7 to 27 (AETWVAIAFVILMGIFAYLGV).

The protein belongs to the ATPase B chain family. In terms of assembly, F-type ATPases have 2 components, F(1) - the catalytic core - and F(0) - the membrane proton channel. F(1) has five subunits: alpha(3), beta(3), gamma(1), delta(1), epsilon(1). F(0) has three main subunits: a(1), b(2) and c(10-14). The alpha and beta chains form an alternating ring which encloses part of the gamma chain. F(1) is attached to F(0) by a central stalk formed by the gamma and epsilon chains, while a peripheral stalk is formed by the delta and b chains.

The protein localises to the cell inner membrane. Functionally, f(1)F(0) ATP synthase produces ATP from ADP in the presence of a proton or sodium gradient. F-type ATPases consist of two structural domains, F(1) containing the extramembraneous catalytic core and F(0) containing the membrane proton channel, linked together by a central stalk and a peripheral stalk. During catalysis, ATP synthesis in the catalytic domain of F(1) is coupled via a rotary mechanism of the central stalk subunits to proton translocation. Its function is as follows. Component of the F(0) channel, it forms part of the peripheral stalk, linking F(1) to F(0). The protein is ATP synthase subunit b 1 of Rhodopseudomonas palustris (strain HaA2).